The following is a 320-amino-acid chain: MKKIAILTSGGDAPGMNAAIRAVVRTAIDKGLEVMGVQRGYSGLLNGELFAMNRTSVSDIIQRGGTILRTARCPEFKDEEVRKRAVKILNAYGVDALVVIGGDGSFMGAKLLSKLGIKTIGLPGTIDNDLAYTDFTIGFDTALNTIVDAINKIRDTSTSHERVSIIEVMGRDCGDLALHAGISSGAEAIIVPEMGEFDRDALCRTILDGKNHGKTHSIVILAEGIGGAEELSKYVQELTGIEARATILGHIQRGGAPSASDRVLASRLGARAVEVLLQGETSRVIGIRDNQIVDQDIDEALAIESKFDLDLYNVAEVLSR.

Gly-11 lines the ATP pocket. 21-25 (RAVVR) contributes to the ADP binding site. ATP is bound by residues 72-73 (RC) and 102-105 (GDGS). Residue Asp-103 participates in Mg(2+) binding. Substrate is bound at residue 125-127 (TID). Asp-127 functions as the Proton acceptor in the catalytic mechanism. Residue Arg-154 participates in ADP binding. Substrate contacts are provided by residues Arg-162 and 169–171 (MGR). Residues 185-187 (GAE) and 214-216 (KTH) each bind ADP. Substrate-binding positions include Glu-223, Arg-244, and 250–253 (HIQR).

This sequence belongs to the phosphofructokinase type A (PFKA) family. ATP-dependent PFK group I subfamily. Prokaryotic clade 'B1' sub-subfamily. Homotetramer. It depends on Mg(2+) as a cofactor.

The protein localises to the cytoplasm. The catalysed reaction is beta-D-fructose 6-phosphate + ATP = beta-D-fructose 1,6-bisphosphate + ADP + H(+). The protein operates within carbohydrate degradation; glycolysis; D-glyceraldehyde 3-phosphate and glycerone phosphate from D-glucose: step 3/4. Its activity is regulated as follows. Allosterically activated by ADP and other diphosphonucleosides, and allosterically inhibited by phosphoenolpyruvate. Catalyzes the phosphorylation of D-fructose 6-phosphate to fructose 1,6-bisphosphate by ATP, the first committing step of glycolysis. This is ATP-dependent 6-phosphofructokinase from Clostridium botulinum (strain Eklund 17B / Type B).